The primary structure comprises 140 residues: D-ribose pyranase (140 aa).

Residue H20 is the Proton donor of the active site. Substrate is bound by residues D28, H99, and 121–123; that span reads YSS.

This sequence belongs to the RbsD / FucU family. RbsD subfamily. As to quaternary structure, homodecamer.

It localises to the cytoplasm. It carries out the reaction beta-D-ribopyranose = beta-D-ribofuranose. Its pathway is carbohydrate metabolism; D-ribose degradation; D-ribose 5-phosphate from beta-D-ribopyranose: step 1/2. In terms of biological role, catalyzes the interconversion of beta-pyran and beta-furan forms of D-ribose. This is D-ribose pyranase from Pseudothermotoga lettingae (strain ATCC BAA-301 / DSM 14385 / NBRC 107922 / TMO) (Thermotoga lettingae).